Consider the following 83-residue polypeptide: Non-muscle caldesmon (83 aa).

Composition is skewed to basic and acidic residues over residues 1 to 44 and 62 to 76; these read QTSE…KEEK and NQLK…KESK. Positions 1-63 are myosin and calmodulin-binding; sequence QTSEKEGRSE…PKPGSIEENQ (63 aa). A disordered region spans residues 1–83; sequence QTSEKEGRSE…ESKNILSLCL (83 aa).

In terms of processing, in non-muscle cells, phosphorylation by CDC2 during mitosis causes caldesmon to dissociate from microfilaments. Phosphorylation reduces caldesmon binding to actin, myosin, and calmodulin as well as its inhibition of actomyosin ATPase activity. Phosphorylation also occurs in both quiescent and dividing smooth muscle cells with similar effects on the interaction with actin and calmodulin and on microfilaments reorganization.

It is found in the cytoplasm. It localises to the cytoskeleton. The protein localises to the myofibril. The protein resides in the stress fiber. Functionally, actin- and myosin-binding protein implicated in the regulation of actomyosin interactions in smooth muscle and nonmuscle cells (could act as a bridge between myosin and actin filaments). Stimulates actin binding of tropomyosin which increases the stabilization of actin filament structure. In muscle tissues, inhibits the actomyosin ATPase by binding to F-actin. This inhibition is attenuated by calcium-calmodulin and is potentiated by tropomyosin. Interacts with actin, myosin, two molecules of tropomyosin and with calmodulin. Also plays an essential role during cellular mitosis and receptor capping. The sequence is that of Non-muscle caldesmon (CALD1) from Bos taurus (Bovine).